Here is a 406-residue protein sequence, read N- to C-terminus: MNGVEGNNELSLANTTTPSHASEDLDLKQDQGLQEETDTVREMEAAGEAGADGGASPDSEHCGPELCFRVAENSCAAAARGLEDAPSPSKGGDAPSAPVAADDSSKNGCQLEGPHSPAKPKALEACGAVGLGSQQMPGPKKTKEMTTTKCAISVATGKEGEAGAAMQEKKGLQKEKKVAGGGKEETRPRAPKINCMDSLEAIDQELSNVNAQADRAFLQLERKFGRMRRLHMQRRSFIIQNIPGFWVTAFRNHPQLSPMISGQDEDMMRYMINLEVEELKQPRVGCKFKFIFQSNPYFRNEGLVKEYERRSSGRVVSLSTPIRWHRGQEPQAHIHRNREGNTIPSFFNWFSDHSLLEFDRIAEIIKGELWSNPLQYYLMGDGPRRGVRVPPRQPVESPRSFRFQSG.

Disordered regions lie at residues 1-63 (MNGV…EHCG), 81-121 (GLED…AKPK), 161-189 (EAGAAMQEKKGLQKEKKVAGGGKEETRPR), and 387-406 (VRVPPRQPVESPRSFRFQSG). A compositionally biased stretch (polar residues) spans 8 to 20 (NELSLANTTTPSH). Positions 93–102 (DAPSAPVAAD) are enriched in low complexity. Residues 167-188 (QEKKGLQKEKKVAGGGKEETRP) are compositionally biased toward basic and acidic residues.

It belongs to the nucleosome assembly protein (NAP) family.

The chain is Testis-specific Y-encoded-like protein 4 (Tspyl4) from Mus musculus (Mouse).